We begin with the raw amino-acid sequence, 595 residues long: MEEADRILIHSLRQAGTAVPPDVQTLRAFTTELVVEAVVRCLRVINPAVGSGLSPLLPLAMSARFRLAMSLAQACMDLGYPLELGYQNFLYPSEPDLRDLLLFLAERLPTDASEDADQSAGESAILLRAIGSRIRDHLALPWVPPLLRTPKLQYLQGSAHQKPFHASRLVMPELSSRGESREFQAGPLLLPVPAQVPQPAARAASLLEHHAIQLCQHTGRDRAGDEDWGHRTSRLPAQEDTRAQRQRLQKHLAEHLRQTWGRPGPPQQARDLGEVLQAWGAGARPGTPKGSRFTHSKKFTFHLEPEAQAAQVSDVPATSQRPEQDTWAAQEQELESLREQLEGVNHNIEEVEANMKTLGINLVQVETECRQSELSIVEREQALRLKSQAVELLPDGAANLAKLQLVVESSAQRVIHLAGQWEKHRVPLLAEYRHLRKLQDCRELESSRRLAEIQELHQSVRAAAEEARRKEEVYKQLVSELETLPKDVSRLAYTQRILEIVGNIRKQKEEITKDAKKDDAVRKAYKYLAALHENCSQLIQTIEDTGTIMREVRDLEEQIETEMGKKTLSNLDKIREDYRALRQENAGLLGRVREA.

The tract at residues 1 to 321 is sufficient for interaction with COMMD1; sequence MEEADRILIH…VSDVPATSQR (321 aa). Residues 1 to 447 form a sufficicient and required for interaction with CCDC93 region; that stretch reads MEEADRILIH…LQDCRELESS (447 aa). Basic and acidic residues predominate over residues 218–230; sequence TGRDRAGDEDWGH. Residues 218–243 form a disordered region; the sequence is TGRDRAGDEDWGHRTSRLPAQEDTRA. Residues 323–369 are a coiled coil; sequence EQDTWAAQEQELESLREQLEGVNHNIEEVEANMKTLGINLVQVETEC. Ser-410 bears the Phosphoserine mark. Coiled coils occupy residues 447–484 and 564–595; these read SRRL…LETL and GKKT…VREA.

The protein belongs to the CCDC22 family. In terms of assembly, component of the commander complex consisting of the CCC subcomplex and the retriever subcomplex. Component of the CCC (COMMD/CCDC22/CCDC93) subcomplex consisting of COMMD1, COMMD2, COMMD3, COMMD4, COMMD5, COMMD6, COMMD7, COMMD8, COMMD9, COMMD10, CCDC22 and CCDC93. Forms a coiled-coil heterodimer with CCDC22; this heterodimer interacts with the guanine nucleotide exchange factor DENND10; the interaction is direct. Interacts with CUL1, CUL2, CUL3, SKP1, BTRC. Interacts with SNX17 and SNX31. Interacts with CPNE1 and CPNE4.

It is found in the endosome. The protein resides in the cytoplasm. The protein localises to the cytoskeleton. Its subcellular location is the microtubule organizing center. It localises to the centrosome. In terms of biological role, component of the commander complex that is essential for endosomal recycling of transmembrane cargos; the Commander complex is composed of composed of the CCC subcomplex and the retriever subcomplex. Component of the CCC complex, which is involved in the regulation of endosomal recycling of surface proteins, including integrins, signaling receptor and channels. Involved in regulation of NF-kappa-B signaling. Promotes ubiquitination of I-kappa-B-kinase subunit IKBKB and its subsequent proteasomal degradation leading to NF-kappa-B activation; the function may involve association with COMMD8 and a CUL1-dependent E3 ubiquitin ligase complex. May down-regulate NF-kappa-B activity via association with COMMD1 and involving a CUL2-dependent E3 ubiquitin ligase complex. Regulates the cellular localization of COMM domain-containing proteins, such as COMMD1 and COMMD10. Component of the CCC complex, which is involved in the regulation of endosomal recycling of surface proteins, including integrins, signaling receptor and channels. The CCC complex associates with SNX17, retriever and WASH complexes to prevent lysosomal degradation and promote cell surface recycling of numerous cargos such as integrins ITGA5:ITGB1. Plays a role in copper ion homeostasis. Involved in copper-dependent ATP7A trafficking between the trans-Golgi network and vesicles in the cell periphery; the function is proposed to depend on its association within the CCC complex and cooperation with the WASH complex on early endosomes. In Bos taurus (Bovine), this protein is Coiled-coil domain-containing protein 22 (CCDC22).